A 91-amino-acid polypeptide reads, in one-letter code: Small ribosomal subunit protein uS15 (91 aa).

The protein belongs to the universal ribosomal protein uS15 family. In terms of assembly, part of the 30S ribosomal subunit. Forms a bridge to the 50S subunit in the 70S ribosome, contacting the 23S rRNA.

One of the primary rRNA binding proteins, it binds directly to 16S rRNA where it helps nucleate assembly of the platform of the 30S subunit by binding and bridging several RNA helices of the 16S rRNA. In terms of biological role, forms an intersubunit bridge (bridge B4) with the 23S rRNA of the 50S subunit in the ribosome. The protein is Small ribosomal subunit protein uS15 of Rickettsia peacockii (strain Rustic).